We begin with the raw amino-acid sequence, 439 residues long: uncharacterized protein (439 aa).

The region spanning 116 to 439 (GKAASYRAAQ…PMRTPLQEAE (324 aa)) is the YcaO domain.

This is an uncharacterized protein from Mycobacterium tuberculosis (strain CDC 1551 / Oshkosh).